A 49-amino-acid chain; its full sequence is Large ribosomal subunit protein bL33A (49 aa).

The protein belongs to the bacterial ribosomal protein bL33 family.

The polypeptide is Large ribosomal subunit protein bL33A (Geobacillus kaustophilus (strain HTA426)).